The primary structure comprises 291 residues: Beta-lactamase CTX-M-4 (291 aa).

A signal peptide spans Met-1–Ala-28. The active-site Acyl-ester intermediate is Ser-73. A substrate-binding site is contributed by Lys-237 to Gly-239.

Belongs to the class-A beta-lactamase family.

It carries out the reaction a beta-lactam + H2O = a substituted beta-amino acid. Its function is as follows. Has cefotaxime-hydrolyzing activity. The sequence is that of Beta-lactamase CTX-M-4 (bla) from Salmonella typhimurium.